The chain runs to 311 residues: Acetyl-coenzyme A carboxylase carboxyl transferase subunit alpha (311 aa).

The CoA carboxyltransferase C-terminal domain maps to glutamate 34–glutamate 286.

This sequence belongs to the AccA family. As to quaternary structure, acetyl-CoA carboxylase is a heterohexamer composed of biotin carboxyl carrier protein (AccB), biotin carboxylase (AccC) and two subunits each of ACCase subunit alpha (AccA) and ACCase subunit beta (AccD).

Its subcellular location is the cytoplasm. It carries out the reaction N(6)-carboxybiotinyl-L-lysyl-[protein] + acetyl-CoA = N(6)-biotinyl-L-lysyl-[protein] + malonyl-CoA. Its pathway is lipid metabolism; malonyl-CoA biosynthesis; malonyl-CoA from acetyl-CoA: step 1/1. Component of the acetyl coenzyme A carboxylase (ACC) complex. First, biotin carboxylase catalyzes the carboxylation of biotin on its carrier protein (BCCP) and then the CO(2) group is transferred by the carboxyltransferase to acetyl-CoA to form malonyl-CoA. This Nitratiruptor sp. (strain SB155-2) protein is Acetyl-coenzyme A carboxylase carboxyl transferase subunit alpha.